We begin with the raw amino-acid sequence, 141 residues long: Hemoglobin subunit alpha-D (141 aa).

The Globin domain occupies 1 to 141 (VLTAEDKKLI…VAAVLAEKYR (141 aa)). Heme b is bound by residues His-58 and His-87.

Belongs to the globin family. In terms of assembly, heterotetramer of two alpha-D chains and two beta chains. As to expression, red blood cells.

Involved in oxygen transport from the lung to the various peripheral tissues. This chain is Hemoglobin subunit alpha-D (HBAD), found in Sturnus vulgaris (Starling).